Consider the following 1079-residue polypeptide: Alpha-mannosidase C (1079 aa).

The first 22 residues, Met1–Ser22, serve as a signal peptide directing secretion. Zn(2+) is bound by residues His44 and Asp46. N-linked (GlcNAc...) asparagine glycans are attached at residues Asn60 and Asn96. Asp158 is a Zn(2+) binding site. Asp158 acts as the Nucleophile in catalysis. N-linked (GlcNAc...) asparagine glycans are attached at residues Asn192, Asn222, Asn248, and Asn467. His475 provides a ligand contact to Zn(2+). 10 N-linked (GlcNAc...) asparagine glycosylation sites follow: Asn516, Asn527, Asn589, Asn760, Asn769, Asn848, Asn872, Asn912, Asn1040, and Asn1057.

The protein belongs to the glycosyl hydrolase 38 family. Zn(2+) is required as a cofactor.

Its subcellular location is the secreted. The catalysed reaction is Hydrolysis of terminal, non-reducing alpha-D-mannose residues in alpha-D-mannosides.. This chain is Alpha-mannosidase C (manC), found in Dictyostelium discoideum (Social amoeba).